We begin with the raw amino-acid sequence, 156 residues long: Small ribosomal subunit protein uS7 (156 aa).

The protein belongs to the universal ribosomal protein uS7 family. In terms of assembly, part of the 30S ribosomal subunit. Contacts proteins S9 and S11.

Functionally, one of the primary rRNA binding proteins, it binds directly to 16S rRNA where it nucleates assembly of the head domain of the 30S subunit. Is located at the subunit interface close to the decoding center, probably blocks exit of the E-site tRNA. The polypeptide is Small ribosomal subunit protein uS7 (Beutenbergia cavernae (strain ATCC BAA-8 / DSM 12333 / CCUG 43141 / JCM 11478 / NBRC 16432 / NCIMB 13614 / HKI 0122)).